Consider the following 148-residue polypeptide: UPF0179 protein Mboo_1959 (148 aa).

This sequence belongs to the UPF0179 family.

This chain is UPF0179 protein Mboo_1959, found in Methanoregula boonei (strain DSM 21154 / JCM 14090 / 6A8).